Here is a 445-residue protein sequence, read N- to C-terminus: Scarecrow-like protein 18 (445 aa).

Over residues 1–21 the composition is skewed to low complexity; it reads MLTSFKSSSSSSEDATATTTE. Residues 1 to 26 are disordered; it reads MLTSFKSSSSSSEDATATTTENPPPL. The GRAS domain occupies 32-445; the sequence is SAATSASHHL…RPLFSVSSWK (414 aa). Residues 39 to 127 form a leucine repeat I (LRI) region; the sequence is HHLRRLLFTA…STVFTSSVCK (89 aa). Residues 146–217 form a VHIID region; the sequence is YLWLNQLTPF…SPPPSLRITG (72 aa). The VHIID signature appears at 179–183; it reads LHILD. Residues 227–259 are leucine repeat II (LRII); the sequence is RTGDRLTRFADSLGLQFQFHTLVIVEEDLAGLL. The interval 275–366 is PFYRE; that stretch reads IAVNCVHFLH…QRWFGKEILD (92 aa). The segment at 369–445 is SAW; that stretch reads AAEETERKQR…RPLFSVSSWK (77 aa).

This sequence belongs to the GRAS family. Expressed in roots and flowers.

The protein resides in the nucleus. Its function is as follows. Probable transcription factor required for axillary (lateral) shoot meristem formation during vegetative development. Seems to act upstream of REVOLUTA. The protein is Scarecrow-like protein 18 (SCL18) of Arabidopsis thaliana (Mouse-ear cress).